Reading from the N-terminus, the 4043-residue chain is Hybrid PKS-NRPS synthetase thnA (4043 aa).

Positions 6–440 (LEPIAIVGSA…GSNAHAILEE (435 aa)) constitute a Ketosynthase family 3 (KS3) domain. Residues C179, H319, and H360 each act as for beta-ketoacyl synthase activity in the active site. The malonyl-CoA:ACP transacylase (MAT) domain stretch occupies residues 558-894 (VFTGQGAQWA…FSDALGFVWT (337 aa)). The interval 952 to 1090 (HEILGTILPE…ATVKIILGTP (139 aa)) is N-terminal hotdog fold. The interval 952 to 1256 (HEILGTILPE…LSIKTFAPAT (305 aa)) is dehydratase (DH) domain. Residues 952–1258 (HEILGTILPE…IKTFAPATQA (307 aa)) enclose the PKS/mFAS DH domain. H984 functions as the Proton acceptor; for dehydratase activity in the catalytic mechanism. Residues 1105–1258 (LFPIDADRFY…IKTFAPATQA (154 aa)) are C-terminal hotdog fold. The active-site Proton donor; for dehydratase activity is the D1166. Positions 1417-1591 (LASMMKQITH…RKAGFAGVDA (175 aa)) are methyltransferase (MT) domain. The interval 2146 to 2320 (TYLLVGLTGK…GSTFDIGQVA (175 aa)) is ketoreductase (KR) domain. Residues 2434 to 2512 (EQALDILKEC…ELCDRVVDKL (79 aa)) enclose the Carrier 1 domain. S2472 bears the O-(pantetheine 4'-phosphoryl)serine mark. Residues 2521–2618 (GKQGESQPPA…PPPPEPAVER (98 aa)) form a disordered region. A compositionally biased stretch (low complexity) spans 2527–2536 (QPPASTAQPQ). Pro residues predominate over residues 2537 to 2547 (PVAPKPKPLPV). Over residues 2578 to 2605 (YSATEASTRSGSPSEATRLSQKVSSKLQ) the composition is skewed to polar residues. Positions 2626–3067 (IKSVPISLGQ…IPRFSEKQLA (442 aa)) are condensation (C) domain. An adenylation (A) domain region spans residues 3092–3496 (QVARENPDKV…GTMVFHSRMA (405 aa)). One can recognise a Carrier 2 domain in the interval 3614-3695 (TELTETMIQL…EMAQKVEETI (82 aa)). O-(pantetheine 4'-phosphoryl)serine is present on S3655. Residues 3736–3954 (ITGATGFLSK…DMLPAVLTAQ (219 aa)) form a reductase (R) domain region.

The protein in the C-terminal section; belongs to the NRP synthetase family.

The enzyme catalyses malate + 6 malonyl-CoA + acetyl-CoA + 2 AH2 + 2 S-adenosyl-L-methionine + 5 NADPH + 9 H(+) = trihazone A + 2 A + 2 S-adenosyl-L-homocysteine + 6 CO2 + 5 NADP(+) + 7 CoA + 6 H2O. The protein operates within secondary metabolite biosynthesis. Its function is as follows. Hybrid PKS-NRPS synthetase; part of the gene cluster that produces the tetronate natural products trihazones. The PKS-NRPS synthetase thnA with the help of the trans-enoyl reductase thnE are responsible for the synthesis of the carboxylmethyl containing trihazone A. The PKS portion of thnA synthesizes beta-keto-triene chain from one acetyl-CoA and 6 equivalents of malonyl-CoA, in collaboration with thnE, which selectively reduces the enoyl intermediate during the first and fourth iteration of the PKS. The NRPS domain selects and activates malate, of which the alpha-hydroxyl group attacks the completed polyketide acyl-S-ACP chain to form the ester product. Intramolecular Dieckmann cyclization catalyzed by the terminal reductase domain releases the product as trihazone A from the PKS-NPRS. The pathway begins with the formation of trihazone A by the hybrid PKS-NRPS synthetase thnA and the trans-enoyl reductase thnE. Trihazone A is further decarboxylated by the 2-oxoglutarate-dependent dioxygenase thnC to produce trihazone D. The function of the FAD-dependent monooxygenase thnD has still to be identified. The chain is Hybrid PKS-NRPS synthetase thnA from Trichoderma harzianum (Hypocrea lixii).